Consider the following 1237-residue polypeptide: Clustered mitochondria protein homolog (1237 aa).

The Clu domain maps to 291 to 535 (DITRSQENCL…RITPLDVAWS (245 aa)). 2 stretches are compositionally biased toward basic and acidic residues: residues 575–597 (RKTA…DKAE) and 845–854 (SQIKSQEHSP). Disordered stretches follow at residues 575-614 (RKTA…AVAS) and 845-886 (SQIK…VAAS). TPR repeat units lie at residues 957–990 (AKLY…TERT), 999–1032 (ILSY…WKII), and 1041–1074 (ITTM…CEGL). Disordered regions lie at residues 1152 to 1189 (RLRR…KSIG) and 1201 to 1237 (FIEG…VQTA). Over residues 1156 to 1187 (TNLSPRMTIGTKPQPQVGQNAPATTNGATSKS) the composition is skewed to polar residues.

The protein belongs to the CLU family. As to quaternary structure, may associate with the eukaryotic translation initiation factor 3 (eIF-3) complex.

It is found in the cytoplasm. Functionally, mRNA-binding protein involved in proper cytoplasmic distribution of mitochondria. The sequence is that of Clustered mitochondria protein homolog from Ajellomyces capsulatus (strain NAm1 / WU24) (Darling's disease fungus).